We begin with the raw amino-acid sequence, 727 residues long: Sodium-dependent neutral amino acid transporter SLC6A17 (727 aa).

Topologically, residues 1–68 (MPKNSKVTQR…DRPAWNSKLQ (68 aa)) are cytoplasmic. Serine 13 and serine 20 each carry phosphoserine. Residues 69 to 89 (YILAQIGFSVGLGNIWRFPYL) form a helical membrane-spanning segment. Topologically, residues 90–96 (CQKNGGG) are extracellular. Residues 97–116 (AYLVPYLVLLIIIGIPLFFL) form a helical membrane-spanning segment. The Cytoplasmic segment spans residues 117-140 (ELAVGQRIRRGSIGVWHYVCPRLG). The chain crosses the membrane as a helical span at residues 141–161 (GIGFSSCIVCLFVGLYYNVII). Residues 162–224 (GWSVFYFFKS…NSISESGGLN (63 aa)) are Extracellular-facing. A glycan (N-linked (GlcNAc...) asparagine) is linked at asparagine 186. A helical membrane pass occupies residues 225-243 (WKMTLCLLVAWSIVGMAVV). At 244–251 (KGIQSSGK) the chain is on the cytoplasmic side. A helical membrane pass occupies residues 252–269 (VMYFSSLFPYVVLACFLV). The Extracellular portion of the chain corresponds to 270-304 (RGLLLRGAVDGILHMFTPKLDKMLDPQVWREAATQ). The chain crosses the membrane as a helical span at residues 305–322 (VFFALGLGFGGVIAFSSY). Over 323–333 (NKQDNNCHFDA) the chain is Cytoplasmic. The helical transmembrane segment at 334–355 (ALVSFINFFTSVLATLVVFAVL) threads the bilayer. Topologically, residues 356–451 (GFKANIMNEK…FIAFTEAMTH (96 aa)) are extracellular. Residue tyrosine 377 is modified to Phosphotyrosine. Residue asparagine 393 is glycosylated (N-linked (GlcNAc...) asparagine). Residues 452–471 (FPASPFWSVMFFLMLINLGL) traverse the membrane as a helical segment. Topologically, residues 472 to 494 (GSMIGTMAGITTPIIDTFKVPKE) are cytoplasmic. Residues 495-513 (MFTVGCCVFAFFVGLLFVQ) form a helical membrane-spanning segment. Over 514 to 528 (RSGNYFVTMFDDYSA) the chain is Extracellular. Residues 529 to 549 (TLPLTVIVILENIAVAWIYGT) traverse the membrane as a helical segment. At 550-569 (KKFMQELTEMLGFQPYRFYF) the chain is on the cytoplasmic side. The helical transmembrane segment at 570-591 (YMWKFVSPLCMAVLTTASIIQL) threads the bilayer. Over 592–618 (GVSPPGYSAWIKEEAAERYLYFPNWAM) the chain is Extracellular. The chain crosses the membrane as a helical span at residues 619 to 641 (ALLITLIAVATLPIPVVFILRHF). The Cytoplasmic segment spans residues 642-727 (HLLSDGSNTL…LLASTPESEL (86 aa)). Serine 665 and serine 701 each carry phosphoserine. A disordered region spans residues 680–727 (VPSEAPSPMPTHRSYLGPGSTSPLDNSNNPNGRYGSGYLLASTPESEL). Polar residues predominate over residues 698–710 (GSTSPLDNSNNPN).

Belongs to the sodium:neurotransmitter symporter (SNF) (TC 2.A.22) family. In terms of tissue distribution, expressed in the brain. The strongest expression levels in embryonic, postnatal, and adult stages are found in both cortical and hippocampal tissues.

It is found in the cytoplasmic vesicle. The protein resides in the secretory vesicle. The protein localises to the synaptic vesicle membrane. It localises to the postsynapse. Its subcellular location is the presynapse. It catalyses the reaction L-proline(in) + Na(+)(in) = L-proline(out) + Na(+)(out). The enzyme catalyses L-leucine(in) + Na(+)(in) = L-leucine(out) + Na(+)(out). It carries out the reaction glycine(in) + Na(+)(in) = glycine(out) + Na(+)(out). The catalysed reaction is L-alanine(in) + Na(+)(in) = L-alanine(out) + Na(+)(out). It catalyses the reaction L-glutamine(in) + Na(+)(in) = L-glutamine(out) + Na(+)(out). Synaptic vesicle transporter with apparent selectivity for neutral amino acids. The transport is sodium-coupled but chloride-independent, likely driven by the proton electrochemical gradient generated by vacuolar H(+)-ATPase in an overall electrogenic mechanism. May contribute to the synaptic uptake of neurotransmitter precursors in a process coupled in part to vesicle exocytosis. This chain is Sodium-dependent neutral amino acid transporter SLC6A17, found in Mus musculus (Mouse).